The chain runs to 229 residues: Zinc finger matrin-type protein 4 (229 aa).

2 consecutive Matrin-type zinc fingers follow at residues S14–L44 and D72–L106. Residues T116–A135 form a disordered region. 2 consecutive Matrin-type zinc fingers follow at residues R145–R175 and Y198–N228.

It is found in the nucleus. This chain is Zinc finger matrin-type protein 4 (ZMAT4), found in Homo sapiens (Human).